Here is a 116-residue protein sequence, read N- to C-terminus: MNATTEMESPLVFTDSAASKVKSLIDEEGNPDLKLRVFVSGGGCSGFQYGFTFDEAQNADDTVMVKNGVTLLVDSMSFQYLVGAEIDYSEGLEGAQFVIKNPNATTTCGCGSSFSA.

Iron-sulfur cluster-binding residues include Cys44, Cys108, and Cys110.

The protein belongs to the HesB/IscA family. In terms of assembly, homodimer. It depends on iron-sulfur cluster as a cofactor.

Functionally, required for insertion of 4Fe-4S clusters. The polypeptide is Putative iron-sulfur cluster insertion protein ErpA (Thiobacillus denitrificans (strain ATCC 25259 / T1)).